The following is a 254-amino-acid chain: Undecaprenyl-diphosphatase (254 aa).

The next 8 helical transmembrane spans lie at 1-21 (MDIIQAIIIGIIEGFTEFLPI), 41-61 (LTKAYEVIIQFAAILAVMLIY), 70-90 (IDLWMKLLFAFLPLAIVGFIF), 97-117 (LFNVQVVAWMFIIGGIIFLIV), 134-154 (VSWTQAWWVGFAQIFSLIPGT), 175-195 (AEFSFLLAIPVMAVVSGYDLL), 209-229 (FLIGFIVAFIVAYATIKLFLV), and 234-254 (FTFVAFGIYRIIFGIFLLMIL).

Belongs to the UppP family.

It localises to the cell inner membrane. It catalyses the reaction di-trans,octa-cis-undecaprenyl diphosphate + H2O = di-trans,octa-cis-undecaprenyl phosphate + phosphate + H(+). Functionally, catalyzes the dephosphorylation of undecaprenyl diphosphate (UPP). Confers resistance to bacitracin. This chain is Undecaprenyl-diphosphatase, found in Sulfurovum sp. (strain NBC37-1).